The chain runs to 319 residues: Glycine--tRNA ligase alpha subunit (319 aa).

Belongs to the class-II aminoacyl-tRNA synthetase family. In terms of assembly, tetramer of two alpha and two beta subunits.

It localises to the cytoplasm. It carries out the reaction tRNA(Gly) + glycine + ATP = glycyl-tRNA(Gly) + AMP + diphosphate. The protein is Glycine--tRNA ligase alpha subunit of Coxiella burnetii (strain CbuK_Q154) (Coxiella burnetii (strain Q154)).